Consider the following 346-residue polypeptide: Very-long-chain 3-oxoacyl-CoA reductase (346 aa).

A helical membrane pass occupies residues serine 26 to valine 46. 8 residues coordinate NADP(+): valine 71, aspartate 126, aspartate 134, asparagine 153, tyrosine 220, lysine 224, isoleucine 253, and serine 255. Catalysis depends on tyrosine 220, which acts as the Proton donor. The active-site Lowers pKa of active site Tyr is lysine 224.

The protein belongs to the short-chain dehydrogenases/reductases (SDR) family.

It is found in the endoplasmic reticulum membrane. It catalyses the reaction a very-long-chain (3R)-3-hydroxyacyl-CoA + NADP(+) = a very-long-chain 3-oxoacyl-CoA + NADPH + H(+). It participates in lipid metabolism; fatty acid biosynthesis. Component of the microsomal membrane bound fatty acid elongation system, which produces the 26-carbon very long-chain fatty acids (VLCFA) from palmitate. Catalyzes the reduction of the 3-ketoacyl-CoA intermediate that is formed in each cycle of fatty acid elongation. VLCFAs serve as precursors for ceramide and sphingolipids. This is Very-long-chain 3-oxoacyl-CoA reductase from Aspergillus oryzae (strain ATCC 42149 / RIB 40) (Yellow koji mold).